The following is a 134-amino-acid chain: Large ribosomal subunit protein bL17 (134 aa).

This sequence belongs to the bacterial ribosomal protein bL17 family. As to quaternary structure, part of the 50S ribosomal subunit. Contacts protein L32.

This Anaplasma marginale (strain Florida) protein is Large ribosomal subunit protein bL17.